The primary structure comprises 308 residues: Porphobilinogen deaminase (308 aa).

C241 is subject to S-(dipyrrolylmethanemethyl)cysteine.

It belongs to the HMBS family. Monomer. It depends on dipyrromethane as a cofactor.

The enzyme catalyses 4 porphobilinogen + H2O = hydroxymethylbilane + 4 NH4(+). Its pathway is porphyrin-containing compound metabolism; protoporphyrin-IX biosynthesis; coproporphyrinogen-III from 5-aminolevulinate: step 2/4. Functionally, tetrapolymerization of the monopyrrole PBG into the hydroxymethylbilane pre-uroporphyrinogen in several discrete steps. The sequence is that of Porphobilinogen deaminase from Staphylococcus aureus (strain Mu50 / ATCC 700699).